The chain runs to 351 residues: Phosphate acyltransferase (351 aa).

Belongs to the PlsX family. As to quaternary structure, homodimer. Probably interacts with PlsY.

It localises to the cytoplasm. It catalyses the reaction a fatty acyl-[ACP] + phosphate = an acyl phosphate + holo-[ACP]. It participates in lipid metabolism; phospholipid metabolism. In terms of biological role, catalyzes the reversible formation of acyl-phosphate (acyl-PO(4)) from acyl-[acyl-carrier-protein] (acyl-ACP). This enzyme utilizes acyl-ACP as fatty acyl donor, but not acyl-CoA. The chain is Phosphate acyltransferase from Neisseria meningitidis serogroup C / serotype 2a (strain ATCC 700532 / DSM 15464 / FAM18).